Here is a 333-residue protein sequence, read N- to C-terminus: MSNVVVCALYKFVSLPHFESLREPLLSMMEQAEIKGTLLLASEGINGTVAGTQAAIDALLAWLNNQNGLENIVYKLSFDDEMPFYRTKVKLKKEIVTMGVEGIDPLKVVGTYVKPQDWNALISDPEVILVDTRNDYEVQIGTFKNAINPVTETFREFPDYVKQNLDPAKHKKVAMFCTGGIRCEKSTAYLKEQGFEEVYHLEGGILKYLEEIKQEESLWEGECFVFDNRVAVDHDLKKGQYDQCNACRMPITEAEKLSLAYVQGVSCPHCIDKISEEQRKRFVERERQVNLAKSRNEAHIGSDVNQVIEARRQKKEALRQQSVEKNKAKQANV.

Positions 123 to 217 (SDPEVILVDT…YLEEIKQEES (95 aa)) constitute a Rhodanese domain. The Cysteine persulfide intermediate role is filled by cysteine 177.

This sequence belongs to the TrhO family.

It carries out the reaction uridine(34) in tRNA + AH2 + O2 = 5-hydroxyuridine(34) in tRNA + A + H2O. Its function is as follows. Catalyzes oxygen-dependent 5-hydroxyuridine (ho5U) modification at position 34 in tRNAs. The polypeptide is tRNA uridine(34) hydroxylase (Shewanella sp. (strain MR-7)).